We begin with the raw amino-acid sequence, 590 residues long: Peroxisomal targeting signal receptor (590 aa).

C6 is covalently cross-linked (Glycyl cysteine thioester (Cys-Gly) (interchain with G-Cter in ubiquitin)). The amphipathic helix 1 (AH1) stretch occupies residues 7-29; sequence SVGSNPLAQLNKHAQGQGSSLSN. K18 is covalently cross-linked (Glycyl lysine isopeptide (Lys-Gly) (interchain with G-Cter in ubiquitin)). Polar residues predominate over residues 18 to 30; that stretch reads KHAQGQGSSLSNT. Positions 18-45 are disordered; sequence KHAQGQGSSLSNTHVRHSGGVSGSNVFR. Residues 56-74 are amphipathic helix 2 (AH2); that stretch reads RQQLNSFMSQPMRLGEDKM. 3 short sequence motifs (wxxxF/Y motif) span residues 108–112, 139–143, and 178–182; these read WTREF, WKFRY, and WNDKF. The interval 227–243 is amphipathic helix 4 (AH4); the sequence is FQEVWDSIQQDTEEMLS. TPR repeat units lie at residues 285-319, 320-353, 424-457, 459-491, and 493-525; these read NPNA…DPKH, VDAW…DPNN, PDIQ…NPND, LMWN…KPSF, and RARY…HDVE.

This sequence belongs to the peroxisomal targeting signal receptor family. Interacts (via WxxxF/Y and LVxEF motifs) with PEX14; promoting translocation through the PEX13-PEX14 docking complex. Monoubiquitinated at Cys-6 by PEX2 during PEX5 passage through the retrotranslocation channel: monoubiquitination acts as a signal for PEX5 extraction and is required for proper export from peroxisomes and recycling. When PEX5 recycling is compromised, polyubiquitinated at Lys-18 by PEX10 during its passage through the retrotranslocation channel, leading to its degradation.

It localises to the cytoplasm. It is found in the cytosol. The protein resides in the peroxisome matrix. In terms of biological role, receptor that mediates peroxisomal import of proteins containing a C-terminal PTS1-type tripeptide peroxisomal targeting signal (SKL-type). Binds to cargo proteins containing a PTS1 peroxisomal targeting signal in the cytosol, and translocates them into the peroxisome matrix by passing through the PEX13-PEX14 docking complex along with cargo proteins. PEX5 receptor is then retrotranslocated into the cytosol, leading to release of bound cargo in the peroxisome matrix, and reset for a subsequent peroxisome import cycle. The chain is Peroxisomal targeting signal receptor (PEX5) from Candida glabrata (strain ATCC 2001 / BCRC 20586 / JCM 3761 / NBRC 0622 / NRRL Y-65 / CBS 138) (Yeast).